The chain runs to 842 residues: Ionotropic receptor 21a (842 aa).

Positions Met1 to Ala15 are cleaved as a signal peptide. A glycan (N-linked (GlcNAc...) asparagine) is linked at Asn325. A run of 2 helical transmembrane segments spans residues Trp405–Thr425 and Trp437–Phe457. An N-linked (GlcNAc...) asparagine glycan is attached at Asn469. The helical transmembrane segment at Trp479 to Leu499 threads the bilayer. N-linked (GlcNAc...) asparagine glycans are attached at residues Asn533, Asn558, Asn583, and Asn588. A helical membrane pass occupies residues Met680–Val700. The interval Trp722–Ala745 is disordered. Residues Asn765 and Asn797 are each glycosylated (N-linked (GlcNAc...) asparagine).

The protein belongs to the glutamate-gated ion channel (TC 1.A.10.1) family. In terms of tissue distribution, expressed in the dorsal organ cool cells. In the antenna, expressed in approximately six neurons in the arista as well as five to ten neurons near the third chamber of the sacculus.

The protein localises to the cell membrane. In terms of biological role, integral part of a neural sensory system in the antenna that provides the neural basis for the response to environmental changes in temperature (thermosensation). Together with Ir25a and Ir93a, mediates the response of the dorsal organ cool cells, a trio of cool-responsive neurons, to cooling and is required for cool avoidance behavior. This chain is Ionotropic receptor 21a, found in Drosophila melanogaster (Fruit fly).